A 1360-amino-acid polypeptide reads, in one-letter code: Probable inactive protein kinase DDB_G0270444 (1360 aa).

4 WD repeats span residues serine 44 to leucine 83, isoleucine 109 to asparagine 152, threonine 166 to threonine 205, and glycine 208 to glycine 247. The region spanning glutamate 636–isoleucine 954 is the Protein kinase domain. Residues lysine 959–glutamine 979 are compositionally biased toward low complexity. Disordered stretches follow at residues lysine 959 to threonine 989, isoleucine 1258 to glutamate 1311, and glutamate 1331 to phenylalanine 1360. 2 coiled-coil regions span residues serine 1014–glutamate 1269 and asparagine 1297–aspartate 1352. The segment covering leucine 1291 to aspartate 1300 has biased composition (basic and acidic residues). Acidic residues-rich tracts occupy residues histidine 1301–glutamate 1311 and glutamate 1331–threonine 1354.

The protein belongs to the protein kinase superfamily. CMGC Ser/Thr protein kinase family.

The sequence is that of Probable inactive protein kinase DDB_G0270444 from Dictyostelium discoideum (Social amoeba).